The chain runs to 407 residues: UPF0597 protein NAMH_0191 (407 aa).

The protein belongs to the UPF0597 family.

The sequence is that of UPF0597 protein NAMH_0191 from Nautilia profundicola (strain ATCC BAA-1463 / DSM 18972 / AmH).